The chain runs to 235 residues: MGQKVHPNGMRLGIIKSWHSTWYANNKNFSNNLNNDFEVRKFLLGQLSKALVSRIIIERPAKSIRVTIYTARPGVIIGRKGEDIEKLREKVSKISGVPTKLNISEIRKPELEAKLLADNIASQLERRVIFRRAIKRVVQSAMRLGAKGIKVEVSGRLSGAEIARTEWYREGRVPLHTFRADIDYSLSEAHTSYGVVGVKVWVFKGEILDKVLFHIDKSKDSLINDFSKKKRKSRV.

Residues 39–107 (VRKFLLGQLS…PTKLNISEIR (69 aa)) enclose the KH type-2 domain.

Belongs to the universal ribosomal protein uS3 family. In terms of assembly, part of the 30S ribosomal subunit. Forms a tight complex with proteins S10 and S14.

In terms of biological role, binds the lower part of the 30S subunit head. Binds mRNA in the 70S ribosome, positioning it for translation. In Blochmanniella floridana, this protein is Small ribosomal subunit protein uS3.